The following is a 235-amino-acid chain: uncharacterized protein (235 aa).

Disordered regions lie at residues 60 to 96 (SSNR…QKKT) and 192 to 235 (LNTS…YDSF). The segment covering 80-93 (SFQNMNSSMPSSTQ) has biased composition (polar residues). Acidic residues predominate over residues 197 to 214 (SEDDTESIVETDYSEEEK).

The protein belongs to the asfivirus DP238L family.

This is an uncharacterized protein from Ornithodoros (relapsing fever ticks).